Reading from the N-terminus, the 355-residue chain is tRNA-specific 2-thiouridylase MnmA 1 (355 aa).

6 to 13 (LLSGGVDS) contacts ATP. Residues 92–94 (NPD) are interaction with target base in tRNA. Cys97 acts as the Nucleophile in catalysis. Cysteines 97 and 192 form a disulfide. Gly120 is a binding site for ATP. The interval 142-144 (KDQ) is interaction with tRNA. Cys192 (cysteine persulfide intermediate) is an active-site residue.

Belongs to the MnmA/TRMU family.

It localises to the cytoplasm. The catalysed reaction is S-sulfanyl-L-cysteinyl-[protein] + uridine(34) in tRNA + AH2 + ATP = 2-thiouridine(34) in tRNA + L-cysteinyl-[protein] + A + AMP + diphosphate + H(+). Its function is as follows. Catalyzes the 2-thiolation of uridine at the wobble position (U34) of tRNA, leading to the formation of s(2)U34. This is tRNA-specific 2-thiouridylase MnmA 1 from Bacteroides thetaiotaomicron (strain ATCC 29148 / DSM 2079 / JCM 5827 / CCUG 10774 / NCTC 10582 / VPI-5482 / E50).